We begin with the raw amino-acid sequence, 273 residues long: Transposon Tn7 transposition protein TnsA (273 aa).

Residues Glu63 and Glu73 contribute to the active site. Residues 90–108 constitute a DNA-binding region (H-T-H motif); it reads TRQIAIDSGIKHPVIRGVD. Asp114 is a catalytic residue. Residues Asp114, Gln130, and Val131 each contribute to the Mg(2+) site. Lys132 is a catalytic residue.

As to quaternary structure, heteromer with TnsB. Interacts with TnsC (via C-terminus); this interaction allows TnsA to bind donor DNA. It depends on Mg(2+) as a cofactor. Mn(2+) is required as a cofactor.

In terms of biological role, required for Tn7 transposition. Forms the transposase, together with TnsB. TnsA executes the 5'-DNA strand breakage reaction. TnsABC and TnsD promote high-frequency insertion of Tn7 into a specific target site known as att-Tn7 whereas TnsABC and TnsE promote low-frequency insertion into many different sites. The sequence is that of Transposon Tn7 transposition protein TnsA from Escherichia coli.